A 132-amino-acid polypeptide reads, in one-letter code: Small ribosomal subunit protein bS6 (132 aa).

Positions 94 to 132 are disordered; it reads DAVTEESQLAKNADEKRARKATTRRPDRDDSDDNDHSED. Residues 122-132 show a composition bias toward acidic residues; it reads DDSDDNDHSED.

This sequence belongs to the bacterial ribosomal protein bS6 family.

Binds together with bS18 to 16S ribosomal RNA. In Psychrobacter arcticus (strain DSM 17307 / VKM B-2377 / 273-4), this protein is Small ribosomal subunit protein bS6.